We begin with the raw amino-acid sequence, 286 residues long: 4-diphosphocytidyl-2-C-methyl-D-erythritol kinase (286 aa).

The active site involves Lys11. Pro94–Ser104 lines the ATP pocket. The active site involves Asp136.

This sequence belongs to the GHMP kinase family. IspE subfamily.

It carries out the reaction 4-CDP-2-C-methyl-D-erythritol + ATP = 4-CDP-2-C-methyl-D-erythritol 2-phosphate + ADP + H(+). It functions in the pathway isoprenoid biosynthesis; isopentenyl diphosphate biosynthesis via DXP pathway; isopentenyl diphosphate from 1-deoxy-D-xylulose 5-phosphate: step 3/6. Its function is as follows. Catalyzes the phosphorylation of the position 2 hydroxy group of 4-diphosphocytidyl-2C-methyl-D-erythritol. This Pseudomonas entomophila (strain L48) protein is 4-diphosphocytidyl-2-C-methyl-D-erythritol kinase.